Reading from the N-terminus, the 192-residue chain is Probable nicotinate-nucleotide adenylyltransferase (192 aa).

Belongs to the NadD family.

The enzyme catalyses nicotinate beta-D-ribonucleotide + ATP + H(+) = deamido-NAD(+) + diphosphate. It participates in cofactor biosynthesis; NAD(+) biosynthesis; deamido-NAD(+) from nicotinate D-ribonucleotide: step 1/1. Its function is as follows. Catalyzes the reversible adenylation of nicotinate mononucleotide (NaMN) to nicotinic acid adenine dinucleotide (NaAD). In Cytophaga hutchinsonii (strain ATCC 33406 / DSM 1761 / CIP 103989 / NBRC 15051 / NCIMB 9469 / D465), this protein is Probable nicotinate-nucleotide adenylyltransferase.